Consider the following 177-residue polypeptide: Meiotically up-regulated gene 121 protein (177 aa).

The N-terminal stretch at 1–23 (MKGFVVISRFILTLFILITPGLA) is a signal peptide. Asn121 carries N-linked (GlcNAc...) asparagine glycosylation.

Its subcellular location is the endoplasmic reticulum. The protein localises to the golgi apparatus. Functionally, has a role in meiosis. The sequence is that of Meiotically up-regulated gene 121 protein (mug121) from Schizosaccharomyces pombe (strain 972 / ATCC 24843) (Fission yeast).